The sequence spans 375 residues: Alcohol dehydrogenase 1A (375 aa).

N-acetylglycine is present on glycine 1. Residues cysteine 46, histidine 67, cysteine 97, cysteine 100, cysteine 103, cysteine 111, and cysteine 174 each contribute to the Zn(2+) site. Residues 199–204 (GLGGVG), aspartate 223, lysine 228, 293–295 (VGL), and arginine 370 each bind NAD(+).

Belongs to the zinc-containing alcohol dehydrogenase family. Class-I subfamily. As to quaternary structure, multimeric (with different ratios of monomers). It depends on Zn(2+) as a cofactor.

Its subcellular location is the cytoplasm. The enzyme catalyses a primary alcohol + NAD(+) = an aldehyde + NADH + H(+). The catalysed reaction is a secondary alcohol + NAD(+) = a ketone + NADH + H(+). The polypeptide is Alcohol dehydrogenase 1A (Saara hardwickii (Indian spiny-tailed lizard)).